Consider the following 472-residue polypeptide: Coenzyme F(430) synthetase (472 aa).

Position 119–125 (119–125 (GVKAKTS)) interacts with ATP.

Belongs to the MurCDEF family.

It carries out the reaction 15,17(3)-seco-F430-17(3)-acid + ATP = coenzyme F430 + ADP + phosphate. Involved in the biosynthesis of the unique nickel-containing tetrapyrrole coenzyme F430, the prosthetic group of methyl-coenzyme M reductase (MCR), which plays a key role in methanogenesis and anaerobic methane oxidation. Catalyzes the activation the g-propionate side chain of 15,17(3)-seco-F430-17(3)-acid (seco-F430) for intramolecular C-C bond formation to yield the carbocyclic F ring of coenzyme F430. The protein is Coenzyme F(430) synthetase of Methanosarcina acetivorans (strain ATCC 35395 / DSM 2834 / JCM 12185 / C2A).